The chain runs to 470 residues: 6-phospho-beta-glucosidase BglB (470 aa).

The active-site Proton donor is the glutamate 172. Glutamate 361 acts as the Nucleophile in catalysis.

It belongs to the glycosyl hydrolase 1 family.

The catalysed reaction is 6-phospho-beta-D-glucosyl-(1-&gt;4)-D-glucose + H2O = D-glucose 6-phosphate + D-glucose. Functionally, catalyzes the hydrolysis of phosphorylated beta-glucosides into glucose-6-phosphate (G-6-P) and aglycone. It has a high affinity for phosphorylated aromatic beta-glucosides (p-nitrophenyl-beta-glucoside, phenyl beta-glucoside, arbutin and phosphorylated salicin), and a low affinity for phosphorylated beta-methyl-glucoside. The sequence is that of 6-phospho-beta-glucosidase BglB (bglB) from Escherichia coli (strain K12).